The chain runs to 138 residues: Basic phospholipase A2 homolog Vur-S49 (138 aa).

The N-terminal stretch at Met-1–Gly-16 is a signal peptide. Cystine bridges form between Cys-42–Cys-131, Cys-44–Cys-60, Cys-59–Cys-111, Cys-65–Cys-138, Cys-66–Cys-104, Cys-73–Cys-97, and Cys-91–Cys-102. Residues Lys-121 to Gly-133 form an important for membrane-damaging activities in eukaryotes and bacteria; heparin-binding region.

The protein belongs to the phospholipase A2 family. Group II subfamily. S49 sub-subfamily. Expressed by the venom gland.

It is found in the secreted. In terms of biological role, snake venom phospholipase A2 homolog that lacks enzymatic activity. Is able to suppress the acetylcholine (ACh)-evoked current mediated by alpha-7 (CHRNA7)-similar nAChRs in L.stagnalis neurons (IC(50)=2.18 uM). This activity is only partially reversible and seems to be non-competitive. This Vipera renardi (Steppe viper) protein is Basic phospholipase A2 homolog Vur-S49.